We begin with the raw amino-acid sequence, 456 residues long: Glutathione reductase (456 aa).

6 residues coordinate FAD: Ser14, Gly15, Glu34, Thr41, Cys42, and Lys50. Ser14 serves as a coordination point for glutathione. A disulfide bond links Cys42 and Cys47. Tyr99 contributes to the glutathione binding site. Gly115 is an FAD binding site. Residues Ala180, Ile183, Glu186, Arg203, Arg209, and Gly267 each contribute to the NADP(+) site. Asp308 is a binding site for FAD. Residue Glu315 coordinates NADP(+). Thr317 is an FAD binding site. Arg325 provides a ligand contact to glutathione. An NADP(+)-binding site is contributed by Val348. FAD is bound at residue His445. Catalysis depends on His445, which acts as the Proton acceptor.

The protein belongs to the class-I pyridine nucleotide-disulfide oxidoreductase family. As to quaternary structure, homodimer. FAD is required as a cofactor.

Its subcellular location is the cytoplasm. It catalyses the reaction 2 glutathione + NADP(+) = glutathione disulfide + NADPH + H(+). In terms of biological role, catalyzes the reduction of glutathione disulfide (GSSG) to reduced glutathione (GSH). Constitutes the major mechanism to maintain a high GSH:GSSG ratio in the cytosol. The protein is Glutathione reductase (gor) of Haemophilus influenzae (strain ATCC 51907 / DSM 11121 / KW20 / Rd).